The following is a 149-amino-acid chain: 3-dehydroquinate dehydratase (149 aa).

Y22 serves as the catalytic Proton acceptor. Substrate is bound by residues N74, H80, and D87. The active-site Proton donor is H100. Substrate-binding positions include 101–102 (MS) and R111.

Belongs to the type-II 3-dehydroquinase family. As to quaternary structure, homododecamer.

The enzyme catalyses 3-dehydroquinate = 3-dehydroshikimate + H2O. It functions in the pathway metabolic intermediate biosynthesis; chorismate biosynthesis; chorismate from D-erythrose 4-phosphate and phosphoenolpyruvate: step 3/7. Functionally, catalyzes a trans-dehydration via an enolate intermediate. The sequence is that of 3-dehydroquinate dehydratase from Leptothrix cholodnii (strain ATCC 51168 / LMG 8142 / SP-6) (Leptothrix discophora (strain SP-6)).